The primary structure comprises 367 residues: Aldo-keto reductase AMT2 (367 aa).

Asp-76 is an NADP(+) binding site. The active-site Proton donor is Tyr-81. Residue His-173 participates in substrate binding. Residues 203–204, Gln-229, 258–268, and 330–338 each bind NADP(+); these read SS, GPLAAGKLARP, and SSVERMDEV. Residues 346 to 367 are disordered; sequence LSDEEESRLEDPYKAQPPQGHS.

The protein belongs to the aldo/keto reductase family.

It participates in mycotoxin biosynthesis. Aldo-keto reductase; part of the gene clusters that mediate the biosynthesis of AM-toxins, host-selective toxins (HSTs) causing Alternaria blotch on apple, a worldwide distributed disease. AM-toxins are cyclic depsipeptides containing the 3 residues 2-hydroxy-isovaleric acid (2-HIV), dehydroalanine, L-alanine which are common for all 3 AM-toxins I to III. The fourth precursor is L-alpha-amino-methoxyphenyl-valeric acid (L-Amv) for AM-toxin I, L-alpha-amino-phenyl-valeric acid (L-Apv) for AM-toxin II, and L-alpha-amino-hydroxyphenyl-valeric acid (L-Ahv) for AM-toxin III. AM-toxins have two target sites for affecting susceptible apple cells; they cause invagination of the plasma membrane and electrolyte loss and chloroplast disorganization. The non-ribosomal peptide synthetase AMT1 contains 4 catalytic modules and is responsible for activation of each residue in AM-toxin. The aldo-keto reductase AMT2 catalyzes the conversion of 2-keto-isovaleric acid (2-KIV) to 2-hydroxy-isovaleric acid (2-HIV), one of the precursor residues incorporated by AMT1 during AM-toxin biosynthesis, by reduction of its ketone to an alcohol. The cytochrome P450 monooxygenase AMT3 and the thioesterase AMT4 are also important for AM-toxin production, but their exact function within the AM-toxin biosynthesis are not known yet. Up to 21 proteins (including AMT1 to AMT4) are predicted to be involved in AM-toxin biosynthesis since their expression ishighly up-regulated in AM-toxin-producing cultures. The sequence is that of Aldo-keto reductase AMT2 from Alternaria alternata (Alternaria rot fungus).